The sequence spans 103 residues: Heme-copper oxidase subunit 4 (103 aa).

The next 3 helical transmembrane spans lie at 20 to 40 (VWIVLVASAVAEVYLVLEGIA), 42 to 62 (NPFVFVLAVALFQSSLIALFF), and 75 to 95 (ITVSGAVLIAILIISAVTSVL).

The protein resides in the cell membrane. The protein is Heme-copper oxidase subunit 4 (aoxC) of Aeropyrum pernix (strain ATCC 700893 / DSM 11879 / JCM 9820 / NBRC 100138 / K1).